A 194-amino-acid chain; its full sequence is 7-methyl-GTP pyrophosphatase (194 aa).

The active-site Proton acceptor is the D69.

It belongs to the Maf family. YceF subfamily. A divalent metal cation serves as cofactor.

It localises to the cytoplasm. The enzyme catalyses N(7)-methyl-GTP + H2O = N(7)-methyl-GMP + diphosphate + H(+). In terms of biological role, nucleoside triphosphate pyrophosphatase that hydrolyzes 7-methyl-GTP (m(7)GTP). May have a dual role in cell division arrest and in preventing the incorporation of modified nucleotides into cellular nucleic acids. This is 7-methyl-GTP pyrophosphatase (yceF1) from Shigella boydii serotype 4 (strain Sb227).